Consider the following 415-residue polypeptide: Squalene synthase 2 (415 aa).

A run of 2 helical transmembrane segments spans residues 281–301 and 392–412; these read AIFR…ALCY and LIVI…SNLP.

Belongs to the phytoene/squalene synthase family. The cofactor is Mg(2+). Requires Mn(2+) as cofactor.

The protein localises to the endoplasmic reticulum membrane. The enzyme catalyses 2 (2E,6E)-farnesyl diphosphate + NADH + H(+) = squalene + 2 diphosphate + NAD(+). It carries out the reaction 2 (2E,6E)-farnesyl diphosphate + NADPH + H(+) = squalene + 2 diphosphate + NADP(+). It functions in the pathway terpene metabolism; lanosterol biosynthesis; lanosterol from farnesyl diphosphate: step 1/3. Its function is as follows. Component of the triterpene saponins (e.g. ginsenosides or panaxosides) and phytosterols biosynthetic pathways. Catalyzes the biosynthesis of squalene. In Panax ginseng (Korean ginseng), this protein is Squalene synthase 2.